The chain runs to 323 residues: Beta-ketoacyl-[acyl-carrier-protein] synthase III (323 aa).

Catalysis depends on residues C114 and H250. The segment at 251-255 is ACP-binding; that stretch reads QANKR. The active site involves N280.

The protein belongs to the thiolase-like superfamily. FabH family. In terms of assembly, homodimer.

It localises to the cytoplasm. It carries out the reaction malonyl-[ACP] + acetyl-CoA + H(+) = 3-oxobutanoyl-[ACP] + CO2 + CoA. Its pathway is lipid metabolism; fatty acid biosynthesis. Its function is as follows. Catalyzes the condensation reaction of fatty acid synthesis by the addition to an acyl acceptor of two carbons from malonyl-ACP. Catalyzes the first condensation reaction which initiates fatty acid synthesis and may therefore play a role in governing the total rate of fatty acid production. Possesses both acetoacetyl-ACP synthase and acetyl transacylase activities. Its substrate specificity determines the biosynthesis of branched-chain and/or straight-chain of fatty acids. This Hyphomonas neptunium (strain ATCC 15444) protein is Beta-ketoacyl-[acyl-carrier-protein] synthase III.